The following is a 908-amino-acid chain: MMPLRILVWNADGVSTKLPEVECFVRRHEIDVLLLSETHCKGAETPKLFGFVAYTANDPSGGNAKGGAAILIKNSLAHFPLTPIATAKVQLAPAVIETALGPISFGAVYCPPRFAWTTDEFKDILEEFQTKFIVAGDWNASHWLWGAGRSNQRGIALANLVLNSEVDSLATGGPTRYPYGCRGSPGYIDFALTKGVLGIHANISAVVELSSDHLPLVITLDAGAISYPKMERLITRRTNLEVFQSQLESTLPLNTAINSGQDVDDAIELLTNNIKSAARLATRSISRQPAADRIPIPREILLLIAEKRRLRTRWMRSRHPSDKTEWNRALSRLRCALVLHKAAWFDERLANTGVESEATHSLWKATRAIKRRCTRKAPLVDSNGTWCRTDLGQAEVFAAHLAERFQPFKLASLQQVEETQDQLNQALQMDMPITPFEPCEVAEVIVRQSNNKAPGHDVICNATLKALPRQAILYITLVFNAIVRLQYFPYQWKLGIISMIHKPGKPEREPASYRPISLLPSISKVFERLIAVRIVSIMEAQGITPEHQFGFRAGHCTVEQLHRVVEQILTAYDSKEYCNSLFLDIREAFDRVWHIGLQLKIKQTLPAPYFGLLKSYLEGRRFAVRFHSAISTEHNVAAGVPQGSVLGPLLYCLYSHDMPQPDVSLYGKSMLATFADDVCVTYRSRCEHDAADGIQDFAYRFSEWARRWNIGINSSKSNNVCFTLKRRTPPPVYIEEVPVPQPNAAKYLGVLLDRRLTFSKHVTDIRTRLRAKVAKHYWLLSSRSKLSLSNKLTIYKQILAPNWKYGCQIWGLACDSHIKRIQAIQNKVARLITGCEWFVRNTTLHRDLKLATVFDEINKHSSRYHDRLERHRNRLASALNRSRPPRRLNRRQPRDLITRSPLTRVRRS.

In terms of domain architecture, Reverse transcriptase spans 481–752 (AIVRLQYFPY…NAAKYLGVLL (272 aa)). The interval 883 to 908 (RPPRRLNRRQPRDLITRSPLTRVRRS) is disordered.

The cofactor is Mg(2+). Requires Mn(2+) as cofactor.

The enzyme catalyses DNA(n) + a 2'-deoxyribonucleoside 5'-triphosphate = DNA(n+1) + diphosphate. In Drosophila melanogaster (Fruit fly), this protein is Probable RNA-directed DNA polymerase from transposon X-element (X-element\ORF2).